A 647-amino-acid chain; its full sequence is Threonine--tRNA ligase (647 aa).

One can recognise a TGS domain in the interval 1–60 (MQVTIEDQSLEAAAGEACGQVLSRAVSGKRLKNAVACLVDGQPRDLAFPLPEDAHELALV). Residues 242–533 (DHRKLGAQLD…LIEHTAGALP (292 aa)) are catalytic. Cys334, His385, and His510 together coordinate Zn(2+).

The protein belongs to the class-II aminoacyl-tRNA synthetase family. As to quaternary structure, homodimer. Zn(2+) serves as cofactor.

It localises to the cytoplasm. The enzyme catalyses tRNA(Thr) + L-threonine + ATP = L-threonyl-tRNA(Thr) + AMP + diphosphate + H(+). Its function is as follows. Catalyzes the attachment of threonine to tRNA(Thr) in a two-step reaction: L-threonine is first activated by ATP to form Thr-AMP and then transferred to the acceptor end of tRNA(Thr). Also edits incorrectly charged L-seryl-tRNA(Thr). The polypeptide is Threonine--tRNA ligase (Solidesulfovibrio magneticus (strain ATCC 700980 / DSM 13731 / RS-1) (Desulfovibrio magneticus)).